Reading from the N-terminus, the 314-residue chain is tRNA dimethylallyltransferase (314 aa).

An ATP-binding site is contributed by 13 to 20; that stretch reads GPTAVGKT. 15–20 provides a ligand contact to substrate; sequence TAVGKT. An interaction with substrate tRNA region spans residues 38–41; sequence DSMQ.

The protein belongs to the IPP transferase family. As to quaternary structure, monomer. Mg(2+) is required as a cofactor.

The enzyme catalyses adenosine(37) in tRNA + dimethylallyl diphosphate = N(6)-dimethylallyladenosine(37) in tRNA + diphosphate. Catalyzes the transfer of a dimethylallyl group onto the adenine at position 37 in tRNAs that read codons beginning with uridine, leading to the formation of N6-(dimethylallyl)adenosine (i(6)A). The chain is tRNA dimethylallyltransferase from Bacillus velezensis (strain DSM 23117 / BGSC 10A6 / LMG 26770 / FZB42) (Bacillus amyloliquefaciens subsp. plantarum).